Consider the following 293-residue polypeptide: 4-hydroxy-tetrahydrodipicolinate synthase (293 aa).

Ser-45 contacts pyruvate. Tyr-133 serves as the catalytic Proton donor/acceptor. Lys-161 acts as the Schiff-base intermediate with substrate in catalysis. Ile-203 contributes to the pyruvate binding site.

Belongs to the DapA family. Homotetramer; dimer of dimers.

It is found in the cytoplasm. The enzyme catalyses L-aspartate 4-semialdehyde + pyruvate = (2S,4S)-4-hydroxy-2,3,4,5-tetrahydrodipicolinate + H2O + H(+). Its pathway is amino-acid biosynthesis; L-lysine biosynthesis via DAP pathway; (S)-tetrahydrodipicolinate from L-aspartate: step 3/4. Catalyzes the condensation of (S)-aspartate-beta-semialdehyde [(S)-ASA] and pyruvate to 4-hydroxy-tetrahydrodipicolinate (HTPA). The protein is 4-hydroxy-tetrahydrodipicolinate synthase of Psychromonas ingrahamii (strain DSM 17664 / CCUG 51855 / 37).